A 993-amino-acid chain; its full sequence is Desmoglein-3 (993 aa).

Residues 1-23 (MTCLFPRALGSLALLMVVLLVQG) form the signal peptide. A propeptide spanning residues 24-49 (ELHVKPGGQHREDGTALQLAKRRYKR) is cleaved from the precursor. 4 Cadherin domains span residues 50–157 (EWVK…PPIF), 158–267 (SQTI…FPVL), 268–388 (RESQ…PPSK), and 384–495 (RPPS…CPSV). Residues 50–617 (EWVKFAKPCR…YGESSWRLGP (568 aa)) lie on the Extracellular side of the membrane. N-linked (GlcNAc...) asparagine glycosylation is found at N110 and N180. N-linked (GlcNAc...) asparagine glycans are attached at residues N459 and N546. A helical membrane pass occupies residues 618-638 (AAIGLILLGLLMLLLAPLLLL). The Cytoplasmic segment spans residues 639–993 (TCDCGSGPIG…LYTKETCSHL (355 aa)). The segment at 641-714 (DCGSGPIGGA…NTYAGGTMVE (74 aa)) is required for interaction with CTNND1 and localization at cell-cell junctions. A disordered region spans residues 845-876 (AKQAKPGPKDSGSGADTCARSMEVPQSGSNRY). 2 Desmoglein repeat repeats span residues 905–930 (MSTS…LLTE) and 931–961 (TYST…ERVI).

Homodimer. Part of a complex that contains DSG3, PKP1, YAP1 and YWHAG; the complex is required for localization of DSG3 and YAP1 to the cell membrane in keratinocytes. Interacts with PKP2. Interacts with CTNND1; the interaction facilitates DSG3 localization and retention at cell-cell junctions. Interacts with CDH1; the interaction is required for CDH1 localization to developing adherens junctions. Interacts with RAC1; the interaction is required for DSG3 translocation to cell-cell junctions, organization of cortical F-actin bundles and actin anchoring at cell-cell junctions. Interacts with DSC3; the interaction may limit the interaction of DSC3 with p38MAPK family members and therefore repress p38MAPK signaling activation. Expressed in the basal layer of the outer root sheath of the telogen hair club, specifically at the cell membrane between the apex of the cells and the surrounding hair club (at protein level). Expression is less abundant between the lateral margins of the outer root sheath basal cells (at protein level). Expressed in epidermis. Expressed in the epithelium of the tongue.

The protein resides in the cell membrane. It is found in the cell junction. It localises to the desmosome. The protein localises to the cytoplasm. Its subcellular location is the tight junction. Its function is as follows. A component of desmosome cell-cell junctions which are required for positive regulation of cellular adhesion. Required for adherens and desmosome junction assembly in response to mechanical force in keratinocytes. Required for desmosome-mediated cell-cell adhesion of cells surrounding the telogen hair club and the basal layer of the outer root sheath epithelium, consequently is essential for the anchoring of telogen hairs in the hair follicle. Required for the maintenance of the epithelial barrier via promoting desmosome-mediated intercellular attachment of suprabasal epithelium to basal cells. May play a role in the protein stability of the desmosome plaque components DSP, JUP, PKP1, PKP2 and PKP3. Required for YAP1 localization at the plasma membrane in keratinocytes in response to mechanical strain, via the formation of an interaction complex composed of DSG3, PKP1 and YWHAG. May also be involved in the positive regulation of YAP1 target gene transcription and as a result cell proliferation. Positively regulates cellular contractility and cell junction formation via organization of cortical F-actin bundles and anchoring of actin to tight junctions, in conjunction with RAC1. The cytoplasmic pool of DSG3 is required for the localization of CDH1 and CTNNB1 at developing adherens junctions, potentially via modulation of SRC activity. Inhibits keratinocyte migration via suppression of p38MAPK signaling, may therefore play a role in moderating wound healing. This is Desmoglein-3 (Dsg3) from Mus musculus (Mouse).